Reading from the N-terminus, the 207-residue chain is Ion-translocating oxidoreductase complex subunit G (207 aa).

A helical membrane pass occupies residues 11-31 (GILLGFIALLCTIISTGIFFL). The residue at position 175 (Thr-175) is an FMN phosphoryl threonine.

This sequence belongs to the RnfG family. In terms of assembly, the complex is composed of six subunits: RnfA, RnfB, RnfC, RnfD, RnfE and RnfG. Requires FMN as cofactor.

The protein localises to the cell inner membrane. Its function is as follows. Part of a membrane-bound complex that couples electron transfer with translocation of ions across the membrane. The polypeptide is Ion-translocating oxidoreductase complex subunit G (Haemophilus influenzae (strain 86-028NP)).